A 353-amino-acid polypeptide reads, in one-letter code: Photosystem II D2 protein (353 aa).

Thr-2 is subject to N-acetylthreonine. Thr-2 is modified (phosphothreonine). Residues 41–61 traverse the membrane as a helical segment; the sequence is CAYFALGGWFTGTTFVTSWYT. His-118 serves as a coordination point for chlorophyll a. The chain crosses the membrane as a helical span at residues 125 to 141; it reads GFMLRQFELARSVQLRP. Pheophytin a-binding residues include Gln-130 and Asn-143. A helical membrane pass occupies residues 153–166; sequence VFVSVFLIYPLGQS. His-198 provides a ligand contact to chlorophyll a. Residues 208 to 228 traverse the membrane as a helical segment; sequence AALLCAIHGATVENTLFEDGD. A plastoquinone contacts are provided by His-215 and Phe-262. His-215 lines the Fe cation pocket. His-269 is a Fe cation binding site. Residues 279-295 traverse the membrane as a helical segment; the sequence is GLWMSAIGVVGLALNLR.

It belongs to the reaction center PufL/M/PsbA/D family. In terms of assembly, PSII is composed of 1 copy each of membrane proteins PsbA, PsbB, PsbC, PsbD, PsbE, PsbF, PsbH, PsbI, PsbJ, PsbK, PsbL, PsbM, PsbT, PsbX, PsbY, PsbZ, Psb30/Ycf12, at least 3 peripheral proteins of the oxygen-evolving complex and a large number of cofactors. It forms dimeric complexes. Requires The D1/D2 heterodimer binds P680, chlorophylls that are the primary electron donor of PSII, and subsequent electron acceptors. It shares a non-heme iron and each subunit binds pheophytin, quinone, additional chlorophylls, carotenoids and lipids. There is also a Cl(-1) ion associated with D1 and D2, which is required for oxygen evolution. The PSII complex binds additional chlorophylls, carotenoids and specific lipids. as cofactor. Phosphorylated on threonine residue(s); phosphorylation increases with increasing light levels.

Its subcellular location is the plastid. It localises to the chloroplast thylakoid membrane. It carries out the reaction 2 a plastoquinone + 4 hnu + 2 H2O = 2 a plastoquinol + O2. In terms of biological role, photosystem II (PSII) is a light-driven water:plastoquinone oxidoreductase that uses light energy to abstract electrons from H(2)O, generating O(2) and a proton gradient subsequently used for ATP formation. It consists of a core antenna complex that captures photons, and an electron transfer chain that converts photonic excitation into a charge separation. The D1/D2 (PsbA/PsbD) reaction center heterodimer binds P680, the primary electron donor of PSII as well as several subsequent electron acceptors. D2 is needed for assembly of a stable PSII complex. This Marchantia polymorpha (Common liverwort) protein is Photosystem II D2 protein.